The sequence spans 272 residues: Putative phosphoenolpyruvate synthase regulatory protein (272 aa).

152-159 (GVSRCGKT) is a binding site for ADP.

It belongs to the pyruvate, phosphate/water dikinase regulatory protein family. PSRP subfamily.

The enzyme catalyses [pyruvate, water dikinase] + ADP = [pyruvate, water dikinase]-phosphate + AMP + H(+). It catalyses the reaction [pyruvate, water dikinase]-phosphate + phosphate + H(+) = [pyruvate, water dikinase] + diphosphate. Its function is as follows. Bifunctional serine/threonine kinase and phosphorylase involved in the regulation of the phosphoenolpyruvate synthase (PEPS) by catalyzing its phosphorylation/dephosphorylation. The chain is Putative phosphoenolpyruvate synthase regulatory protein from Pseudomonas fluorescens (strain SBW25).